We begin with the raw amino-acid sequence, 360 residues long: MLKEKNSAGGGKFNFFNFLKEKDNNQAEPSNVKEFISYLKNKIINEKYEITREEAIFLSQIPNNDMETLNILFNAADQIREVFCGKYFDLCTIINAKSGKCSENCKYCAQSVHFKTGTDVYGLISKELALYEAKRNENEGAHRFSLVTSGRGLNGNEKELDKLVEIYKYIGEHTSKLELCASHGICTKEALQKLVDAGVLTYHHNLESSRRFYPNVCTSHSYDDRINTIKNAKAVGLDVCSGGIFGLGETIEDRIDMALDLRALEIHSVPINVLTPIPGTPFENNEEVNPFEILKTISIYRFIMPKSFLRYCGGRIKLGEHAKTGLRCGINSALTGNFLTTTGTTIETDKKMIKELGYEI.

The region spanning 83–315 is the Radical SAM core domain; it reads FCGKYFDLCT…KSFLRYCGGR (233 aa). Cys-101, Cys-105, and Cys-108 together coordinate [4Fe-4S] cluster. Positions 145, 180, 240, and 310 each coordinate [2Fe-2S] cluster.

This sequence belongs to the radical SAM superfamily. Biotin synthase family. Homodimer. It depends on [4Fe-4S] cluster as a cofactor. [2Fe-2S] cluster is required as a cofactor.

The catalysed reaction is (4R,5S)-dethiobiotin + (sulfur carrier)-SH + 2 reduced [2Fe-2S]-[ferredoxin] + 2 S-adenosyl-L-methionine = (sulfur carrier)-H + biotin + 2 5'-deoxyadenosine + 2 L-methionine + 2 oxidized [2Fe-2S]-[ferredoxin]. Its pathway is cofactor biosynthesis; biotin biosynthesis; biotin from 7,8-diaminononanoate: step 2/2. Functionally, catalyzes the conversion of dethiobiotin (DTB) to biotin by the insertion of a sulfur atom into dethiobiotin via a radical-based mechanism. The polypeptide is Biotin synthase (Fusobacterium nucleatum subsp. nucleatum (strain ATCC 25586 / DSM 15643 / BCRC 10681 / CIP 101130 / JCM 8532 / KCTC 2640 / LMG 13131 / VPI 4355)).